Here is a 46-residue protein sequence, read N- to C-terminus: Toxin Up-1 (46 aa).

Its subcellular location is the secreted. The protein resides in the nematocyst. It localises to the target cell membrane. Functionally, this toxin is a potent hemolysin devoid of enzymatic activity. Its hemolytic activity is inhibited by sphingomyelin but not by cholesterol. In erythrocyte membranes, it causes numerous cell membrane ruptures. It also exerces cytotoxicity to different cell lines. It exerces a positive inotropic effect. Also causes hemorrhage and necrosis by dilation of the blood vessels in the skin, and vascular leakage of fluids and rupture of alveolar walls of the lungs. Is a potent ichtyotoxin. May act as a pore-forming toxin. In Urticina piscivora (Fish-eating sea anemone), this protein is Toxin Up-1.